Reading from the N-terminus, the 93-residue chain is CRISPR-associated endoribonuclease Cas2 (93 aa).

Aspartate 8 serves as a coordination point for Mg(2+).

Belongs to the CRISPR-associated endoribonuclease Cas2 protein family. As to quaternary structure, homodimer, forms a heterotetramer with a Cas1 homodimer. Mg(2+) is required as a cofactor.

CRISPR (clustered regularly interspaced short palindromic repeat), is an adaptive immune system that provides protection against mobile genetic elements (viruses, transposable elements and conjugative plasmids). CRISPR clusters contain sequences complementary to antecedent mobile elements and target invading nucleic acids. CRISPR clusters are transcribed and processed into CRISPR RNA (crRNA). Functions as a ssRNA-specific endoribonuclease. Involved in the integration of spacer DNA into the CRISPR cassette. The protein is CRISPR-associated endoribonuclease Cas2 of Thermofilum pendens (strain DSM 2475 / Hrk 5).